Reading from the N-terminus, the 253-residue chain is Proteasome subunit alpha (253 aa).

Residues 229–253 (ADESQSYIDDIEDAADDSDDDDDEE) are disordered. A compositionally biased stretch (acidic residues) spans 237 to 253 (DDIEDAADDSDDDDDEE).

This sequence belongs to the peptidase T1A family. As to quaternary structure, the 20S proteasome core is composed of 14 alpha and 14 beta subunits that assemble into four stacked heptameric rings, resulting in a barrel-shaped structure. The two inner rings, each composed of seven catalytic beta subunits, are sandwiched by two outer rings, each composed of seven alpha subunits. The catalytic chamber with the active sites is on the inside of the barrel. Has a gated structure, the ends of the cylinder being occluded by the N-termini of the alpha-subunits. Is capped at one or both ends by the proteasome regulatory ATPase, PAN.

It is found in the cytoplasm. The formation of the proteasomal ATPase PAN-20S proteasome complex, via the docking of the C-termini of PAN into the intersubunit pockets in the alpha-rings, triggers opening of the gate for substrate entry. Interconversion between the open-gate and close-gate conformations leads to a dynamic regulation of the 20S proteasome proteolysis activity. Functionally, component of the proteasome core, a large protease complex with broad specificity involved in protein degradation. This Halobacterium salinarum (strain ATCC 29341 / DSM 671 / R1) protein is Proteasome subunit alpha.